The sequence spans 369 residues: UDP-N-acetylglucosamine--N-acetylmuramyl-(pentapeptide) pyrophosphoryl-undecaprenol N-acetylglucosamine transferase (369 aa).

Residues 10–12 (TGG), N124, R166, S196, and Q300 contribute to the UDP-N-acetyl-alpha-D-glucosamine site.

It belongs to the glycosyltransferase 28 family. MurG subfamily.

It localises to the cell membrane. The catalysed reaction is di-trans,octa-cis-undecaprenyl diphospho-N-acetyl-alpha-D-muramoyl-L-alanyl-D-glutamyl-meso-2,6-diaminopimeloyl-D-alanyl-D-alanine + UDP-N-acetyl-alpha-D-glucosamine = di-trans,octa-cis-undecaprenyl diphospho-[N-acetyl-alpha-D-glucosaminyl-(1-&gt;4)]-N-acetyl-alpha-D-muramoyl-L-alanyl-D-glutamyl-meso-2,6-diaminopimeloyl-D-alanyl-D-alanine + UDP + H(+). Its pathway is cell wall biogenesis; peptidoglycan biosynthesis. Cell wall formation. Catalyzes the transfer of a GlcNAc subunit on undecaprenyl-pyrophosphoryl-MurNAc-pentapeptide (lipid intermediate I) to form undecaprenyl-pyrophosphoryl-MurNAc-(pentapeptide)GlcNAc (lipid intermediate II). The sequence is that of UDP-N-acetylglucosamine--N-acetylmuramyl-(pentapeptide) pyrophosphoryl-undecaprenol N-acetylglucosamine transferase from Desulfitobacterium hafniense (strain Y51).